Consider the following 64-residue polypeptide: Alpha-conotoxin-like Lp1.7 (64 aa).

An N-terminal signal peptide occupies residues methionine 1 to serine 21. A propeptide spanning residues phenylalanine 22–arginine 41 is cleaved from the precursor. 2 cysteine pairs are disulfide-bonded: cysteine 47/cysteine 53 and cysteine 48/cysteine 61. A lacks the Ser-Xaa-Pro motif that is crucial for potent interaction with nAChR region spans residues aspartate 49 to proline 51.

Belongs to the conotoxin A superfamily. As to expression, expressed by the venom duct.

The protein localises to the secreted. In terms of biological role, alpha-conotoxins act on postsynaptic membranes, they bind to the nicotinic acetylcholine receptors (nAChR) and thus inhibit them. Has possibly a distinct nAChR binding mode from other alpha-conotoxins, due to a different three residue motif (lacks the Ser-Xaa-Pro motif). The sequence is that of Alpha-conotoxin-like Lp1.7 from Conus leopardus (Leopard cone).